The following is a 719-amino-acid chain: MFNKVTKSFQYGQHTVVLETGEIARQASGAVLVSVDDTVVLATVVAAKKAKPGQTFFPLTVDYIEKTYAAGRIPGGFFKREGKPSEKETLTSRLIDRPLRPLFPEGFYNEVQVVLHTVSVNPEIDPDIPAMIGASAALAISGIPFNGPIGAARVGYVDGQYVLNPTATQLKSSQMDLVVAGTENAVLMVESEAKQLSEDVMLGGVVYGHEQMQAAINAIHDLVRDAGKPDWEWQPEPKNEALIAAVTAAAQEKLVAAYQERQKQARTALLRNVYADVHAALAEQAAAAGQDAPDAVTVDNILFDLEARIVRGQILNGEPRIDGRDTRTVRPIEIRLGVLPRAHGSALFTRGETQALVVATLGTKQDEQIIDALMGEYRDRFMLHYNMPPFATGETGRIGVPKRREIGHGRLAKRALVSLLPAHEDFQYTIRLVSEITESNGSSSMASVCGGSLAMMDAGVPLQDHVAGVAMGLILDDGKFAVLTDILGDEDHLGDMDFKVAGTQNGITALQMDIKIQGITKEIMQVALAQAREGRLHILGKMREALEGSRGELSAFAPRMLTIKINPEKIRDVIGKGGATIRALTEETGTQIDISDDGTIVIASVDEAQAKEAQRRIVELTADVEVGQVYDGSVLRLLDFGAIVQVLPGRDGLLHISEIANYRIANINDVLKVGQQVRVKVIEADDKGRLRLSVKAIGGIEQQQAGGAEPAAQPESQAE.

Positions 491 and 497 each coordinate Mg(2+). The region spanning 558-617 is the KH domain; sequence PRMLTIKINPEKIRDVIGKGGATIRALTEETGTQIDISDDGTIVIASVDEAQAKEAQRRI. In terms of domain architecture, S1 motif spans 627–695; sequence GQVYDGSVLR…DKGRLRLSVK (69 aa).

Belongs to the polyribonucleotide nucleotidyltransferase family. Mg(2+) serves as cofactor.

Its subcellular location is the cytoplasm. It catalyses the reaction RNA(n+1) + phosphate = RNA(n) + a ribonucleoside 5'-diphosphate. Functionally, involved in mRNA degradation. Catalyzes the phosphorolysis of single-stranded polyribonucleotides processively in the 3'- to 5'-direction. The chain is Polyribonucleotide nucleotidyltransferase from Bordetella petrii (strain ATCC BAA-461 / DSM 12804 / CCUG 43448).